Here is a 453-residue protein sequence, read N- to C-terminus: Protein vestigial (453 aa).

The interval 145 to 279 (AAGHSLHSSH…GGGLAGSGQG (135 aa)) is disordered. The segment covering 151 to 177 (HSSHRTHAHSLAHAHTHPHSHTHTHTH) has biased composition (basic residues). A compositionally biased stretch (basic and acidic residues) spans 178–193 (QTKEEDLIVPRSEAEA). 2 stretches are compositionally biased toward gly residues: residues 227–253 (HGGG…GGTG) and 267–278 (GSGGGGLAGSGQ). The segment at 279 to 335 (GQAQYLSASCVVFTNYSGDTASQVDEHFSRALNYNNKDSKESSSPMSNRNFPPSFWN) is ser-rich sd binding domain.

In terms of assembly, the Ser-rich protein domain within the C-terminal region interacts with the C-terminus of sd to form a complex which acts as a selector for wing development. Interacts with Dhfr. As to expression, expressed in the developing wing primordia initially along the D/V wing boundary, and by the late third larval instar, maximal expression is seen in cells at the D/V wing disk boundary. Less expression is seen in cells located farther from this boundary.

The protein localises to the nucleus. In terms of biological role, involved in determining which thoracic imaginal disk cells will form wings and halteres, perhaps by interacting with other nuclear regulatory proteins. When in combination with scalloped (sd), it acts as a transcriptional activation complex that regulates gene expression in the wing. Binding to sd switches the DNA target selectivity of sd. Required and sufficient for cell proliferation at the dorsal/ventral (D/V) boundary of the wing imaginal disk. Also required for cell proliferation in the wing imaginal disk, mediated via activation of E2f. By interacting with Dhfr, may control genes involved in DNA replication. The protein is Protein vestigial (vg) of Drosophila melanogaster (Fruit fly).